Consider the following 2641-residue polypeptide: Inverse autotransporter adhesin YeeJ (2641 aa).

Residues 1–26 (MGIKLRRLTAGICLVTQLAFPMAAAA) form the signal peptide. Residues 50–98 (VPYILGALESAQSVAERFGISVAELRKLNQFRTFARGFDNVRQGDELDV) enclose the LysM domain. Positions 99–118 (PAQVSEKKLTPPPGNSSDNL) are disordered. The interval 125-400 (TSQQIGSLLA…SRYDLVDRNN (276 aa)) is inverse autotransporter. The segment at 513 to 605 (QKDSSVSLST…GVDAAKAPAV (93 aa)) is invasin 3 domain. Big-1 domains are found at residues 617 to 711 (HSSI…AGFI), 721 to 815 (IATL…VSFV), 822 to 913 (QVDL…VNFI), 920 to 1017 (ALTL…MTFV), 1024 to 1116 (VVVL…VNIA), 1123 to 1220 (QVTL…VTFV), 1227 to 1319 (VVVL…VNIA), 1326 to 1423 (QVTL…VTFV), 1430 to 1523 (QVVL…VHFI), 1531 to 1633 (IIEL…SINV), 1641 to 1734 (HLTL…VTYV), 1741 to 1837 (EISL…VNFT), 1844 to 1941 (QVNL…VTLI), 1948 to 2032 (KLTS…PTEV), 2048 to 2139 (FTSL…LEAI), 2142 to 2236 (KLTL…VKVT), and 2244 to 2336 (VASF…ITLV). Residues 2538-2641 (KSWWVNAGDA…FAHATCYKNL (104 aa)) are C-type lectin domain.

Belongs to the intimin/invasin family.

It localises to the cell outer membrane. In terms of biological role, a probable inverse autotransporter, it may be involved in biofilm formation and cell adhesion. May bind peptidoglycan via its LysM domain. Upon overexpression shows increased mature biofilm formation. This is Inverse autotransporter adhesin YeeJ from Escherichia coli O17:K52:H18 (strain UMN026 / ExPEC).